The chain runs to 434 residues: MFS-type transporter pynF (434 aa).

Residues 1-13 (MSHDQRSPSEEVS) show a composition bias toward basic and acidic residues. The interval 1-34 (MSHDQRSPSEEVSRTALSKPASESTIVGDGHHPL) is disordered. 12 consecutive transmembrane segments (helical) span residues 44-64 (WLVVVGGLLIYFPTFGFLNAF), 84-104 (IAWIGSLQIFLLFIGGLVVGP), 109-129 (VGATKLLVPGSVVYVVALMLT), 138-158 (LILAQGILFGCANALLFYPTI), 171-191 (IALGLAVSGSSLGGIFWTEII), 203-223 (TVRACGFISLAFLVPSCVLII), 249-269 (LLFSVGMLLVLWGMFIPFFYL), 280-302 (VTGANNLLAYMNAGSFVGRVLTG), 311-331 (FNVISLAALSCGILLFCLHKI), 334-354 (SGAIIAFSTLYGICSGGLISL), 375-395 (LMMGFCSVGGLTGSPIAGALL), and 402-422 (WYGFIDFCGSILMGGAVVTIL).

It belongs to the major facilitator superfamily. Monocarboxylate porter (TC 2.A.1.13) family.

It is found in the cell membrane. In terms of biological role, MFS-type transporter; part of the gene cluster that mediates the biosynthesis of pyranonigrins, a family of antioxidative compounds. May be involved in the secretion of pyranonigrins. The chain is MFS-type transporter pynF from Aspergillus niger (strain ATCC MYA-4892 / CBS 513.88 / FGSC A1513).